The chain runs to 528 residues: Lanosterol 14-alpha demethylase (528 aa).

The helical transmembrane segment at 15 to 37 (LSLSVTQQISILLGVPFVYNLVW) threads the bilayer. Residue tyrosine 64 participates in oteseconazole binding. An itraconazole-binding site is contributed by tyrosine 118. Glycine 307 is a binding site for posaconazole. Histidine 377 is an oteseconazole binding site. Cysteine 470 serves as a coordination point for heme.

Belongs to the cytochrome P450 family. Heme serves as cofactor.

Its subcellular location is the endoplasmic reticulum membrane. It catalyses the reaction a 14alpha-methyl steroid + 3 reduced [NADPH--hemoprotein reductase] + 3 O2 = a Delta(14) steroid + formate + 3 oxidized [NADPH--hemoprotein reductase] + 4 H2O + 4 H(+). It carries out the reaction a 14alpha-methyl steroid + reduced [NADPH--hemoprotein reductase] + O2 = a 14alpha-hydroxymethyl steroid + oxidized [NADPH--hemoprotein reductase] + H2O + H(+). The enzyme catalyses a 14alpha-hydroxymethyl steroid + reduced [NADPH--hemoprotein reductase] + O2 = a 14alpha-formyl steroid + oxidized [NADPH--hemoprotein reductase] + 2 H2O + H(+). The catalysed reaction is a 14alpha-formyl steroid + reduced [NADPH--hemoprotein reductase] + O2 = a Delta(14) steroid + formate + oxidized [NADPH--hemoprotein reductase] + H2O + 2 H(+). It catalyses the reaction lanosterol + 3 reduced [NADPH--hemoprotein reductase] + 3 O2 = 4,4-dimethyl-5alpha-cholesta-8,14,24-trien-3beta-ol + formate + 3 oxidized [NADPH--hemoprotein reductase] + 4 H2O + 4 H(+). It carries out the reaction lanosterol + reduced [NADPH--hemoprotein reductase] + O2 = 32-hydroxylanosterol + oxidized [NADPH--hemoprotein reductase] + H2O + H(+). The enzyme catalyses 32-hydroxylanosterol + reduced [NADPH--hemoprotein reductase] + O2 = 32-oxolanosterol + oxidized [NADPH--hemoprotein reductase] + 2 H2O + H(+). The catalysed reaction is 32-oxolanosterol + reduced [NADPH--hemoprotein reductase] + O2 = 4,4-dimethyl-5alpha-cholesta-8,14,24-trien-3beta-ol + formate + oxidized [NADPH--hemoprotein reductase] + H2O + 2 H(+). It catalyses the reaction eburicol + 3 reduced [NADPH--hemoprotein reductase] + 3 O2 = 14-demethyleburicol + formate + 3 oxidized [NADPH--hemoprotein reductase] + 4 H2O + 4 H(+). It carries out the reaction eburicol + reduced [NADPH--hemoprotein reductase] + O2 = 32-hydroxyeburicol + oxidized [NADPH--hemoprotein reductase] + H2O + H(+). The enzyme catalyses 32-hydroxyeburicol + reduced [NADPH--hemoprotein reductase] + O2 = 32-oxoeburicol + oxidized [NADPH--hemoprotein reductase] + 2 H2O + H(+). The catalysed reaction is 32-oxoeburicol + reduced [NADPH--hemoprotein reductase] + O2 = 14-demethyleburicol + formate + oxidized [NADPH--hemoprotein reductase] + H2O + 2 H(+). The protein operates within steroid biosynthesis; zymosterol biosynthesis; zymosterol from lanosterol: step 1/6. The catalytic activity is inhibited by the binding of azoles clotrimazole, miconazole, fluconazole, ketoconazole, oteseconazole (VT-1161), tetraconazole, the triazole SCH39304, and the triazole derivative ICI 153066. Sterol 14alpha-demethylase that plays a critical role in the third module of ergosterol biosynthesis pathway, being ergosterol the major sterol component in fungal membranes that participates in a variety of functions. The third module or late pathway involves the ergosterol synthesis itself through consecutive reactions that mainly occur in the endoplasmic reticulum (ER) membrane. In filamentous fungi, during the initial step of this module, lanosterol (lanosta-8,24-dien-3beta-ol) can be metabolized to eburicol. Sterol 14alpha-demethylase catalyzes the three-step oxidative removal of the 14alpha-methyl group (C-32) of both these sterols in the form of formate, and converts eburicol and lanosterol to 14-demethyleburicol (4,4,24-trimethylergosta-8,14,24(28)-trienol) and 4,4-dimethyl-5alpha-cholesta-8,14,24-trien-3beta-ol, respectively, which are further metabolized by other enzymes in the pathway to ergosterol. Can also use substrates not intrinsic to fungi, such as 24,25-dihydrolanosterol (DHL), producing 4,4-dimethyl-8,14-cholestadien-3-beta-ol, but at lower rates than the endogenous substrates. The chain is Lanosterol 14-alpha demethylase from Candida albicans (strain SC5314 / ATCC MYA-2876) (Yeast).